The following is a 482-amino-acid chain: Wax ester synthase/diacylglycerol acyltransferase 9 (482 aa).

Topologically, residues 1–195 (MEKKMKEEEE…FRLVLVVCST (195 aa)) are cytoplasmic. His-140 (proton acceptor) is an active-site residue. Residues 196–216 (VRLIWNTLVDSFLCMATIFFL) form a helical membrane-spanning segment. The Lumenal portion of the chain corresponds to 217 to 328 (KDTDTPLKGK…AKGSKCRWGN (112 aa)). Residues 329–349 (YISVILFPFTIALQSDPLVYL) form a helical membrane-spanning segment. The Cytoplasmic portion of the chain corresponds to 350-366 (SNVKSMIDRKKNSLITY). A helical transmembrane segment spans residues 367 to 387 (IIYTFSEFVIKAFGINVAVAF). At 388–482 (QRKIMLNTTM…LEKGLPNHVN (95 aa)) the chain is on the lumenal side. An N-linked (GlcNAc...) asparagine glycan is attached at Asn-394.

This sequence in the N-terminal section; belongs to the long-chain O-acyltransferase family. In terms of tissue distribution, mostly expressed in stems and siliques.

The protein resides in the cell membrane. The protein localises to the endoplasmic reticulum membrane. The enzyme catalyses an acyl-CoA + a 1,2-diacyl-sn-glycerol = a triacyl-sn-glycerol + CoA. It catalyses the reaction a long chain fatty alcohol + a fatty acyl-CoA = a wax ester + CoA. It functions in the pathway glycerolipid metabolism; triacylglycerol biosynthesis. The protein operates within lipid metabolism. Bifunctional wax ester synthase/diacylglycerol acyltransferase. Involved in cuticular wax biosynthesis. The protein is Wax ester synthase/diacylglycerol acyltransferase 9 of Arabidopsis thaliana (Mouse-ear cress).